Here is a 377-residue protein sequence, read N- to C-terminus: N-acetyldiaminopimelate deacetylase (377 aa).

The active site involves Asp69. The active-site Proton acceptor is the Glu128.

This sequence belongs to the peptidase M20A family. N-acetyldiaminopimelate deacetylase subfamily.

The enzyme catalyses N-acetyl-(2S,6S)-2,6-diaminopimelate + H2O = (2S,6S)-2,6-diaminopimelate + acetate. The protein operates within amino-acid biosynthesis; L-lysine biosynthesis via DAP pathway; LL-2,6-diaminopimelate from (S)-tetrahydrodipicolinate (acetylase route): step 3/3. Its function is as follows. Catalyzes the conversion of N-acetyl-diaminopimelate to diaminopimelate and acetate. In Streptococcus gordonii (strain Challis / ATCC 35105 / BCRC 15272 / CH1 / DL1 / V288), this protein is N-acetyldiaminopimelate deacetylase.